The sequence spans 332 residues: Glycerol-3-phosphate dehydrogenase [NAD(P)+] (332 aa).

Residues tryptophan 11, arginine 30, and lysine 108 each contribute to the NADPH site. Positions 108, 137, and 139 each coordinate sn-glycerol 3-phosphate. Alanine 141 is an NADPH binding site. Sn-glycerol 3-phosphate is bound by residues lysine 192, aspartate 245, serine 255, arginine 256, and asparagine 257. The active-site Proton acceptor is the lysine 192. Residue arginine 256 participates in NADPH binding. 2 residues coordinate NADPH: valine 280 and glutamate 282.

It belongs to the NAD-dependent glycerol-3-phosphate dehydrogenase family.

The protein localises to the cytoplasm. The enzyme catalyses sn-glycerol 3-phosphate + NAD(+) = dihydroxyacetone phosphate + NADH + H(+). It catalyses the reaction sn-glycerol 3-phosphate + NADP(+) = dihydroxyacetone phosphate + NADPH + H(+). It functions in the pathway membrane lipid metabolism; glycerophospholipid metabolism. Catalyzes the reduction of the glycolytic intermediate dihydroxyacetone phosphate (DHAP) to sn-glycerol 3-phosphate (G3P), the key precursor for phospholipid synthesis. This chain is Glycerol-3-phosphate dehydrogenase [NAD(P)+], found in Burkholderia cenocepacia (strain HI2424).